Consider the following 346-residue polypeptide: MANAYKQAGVDIEAGYEAVSRMKKHVQTTMRKEVLGGLGGFGGMFDLSKFALEEPVLVSGTDGVGTKLMLAFMADKHDTIGIDAVAMCVNDIVVQGAEPLFFLDYIACGKAEPSKIENIVKGISEGCRQAGCALIGGETAEMPGMYSTEEYDLAGFTVGIVDKKKIVTGEKIEAGHVLIGLASSGIHSNGYSLVRKVLLEDGELSLERIYGRLELPLGEELLKPTKIYVKPILELLKKHEVYGMAHITGGGFIENIPRMLPEGIGAEIELGSWEIQPIFSLLQEVGKLEEKEMFNIFNMGIGMVVAVKEEDAKDVVRLLEEQGEMARIIGRTIQGAGVTFNGGTAL.

It belongs to the AIR synthase family.

Its subcellular location is the cytoplasm. It carries out the reaction 2-formamido-N(1)-(5-O-phospho-beta-D-ribosyl)acetamidine + ATP = 5-amino-1-(5-phospho-beta-D-ribosyl)imidazole + ADP + phosphate + H(+). It functions in the pathway purine metabolism; IMP biosynthesis via de novo pathway; 5-amino-1-(5-phospho-D-ribosyl)imidazole from N(2)-formyl-N(1)-(5-phospho-D-ribosyl)glycinamide: step 2/2. This Bacillus cereus (strain B4264) protein is Phosphoribosylformylglycinamidine cyclo-ligase.